Reading from the N-terminus, the 58-residue chain is Large ribosomal subunit protein eL37 (58 aa).

Residues Cys-20, Cys-23, Cys-35, and Cys-38 each coordinate Zn(2+). Residues 20–38 form a C4-type zinc finger; that stretch reads CRRCGEKSYHVKKERCSSC. The segment at 39-58 is disordered; the sequence is GFGDSASRRGYAWQSKSGDN.

Belongs to the eukaryotic ribosomal protein eL37 family. Zn(2+) is required as a cofactor.

In terms of biological role, binds to the 23S rRNA. This Halorubrum lacusprofundi (strain ATCC 49239 / DSM 5036 / JCM 8891 / ACAM 34) protein is Large ribosomal subunit protein eL37.